Consider the following 104-residue polypeptide: Large ribosomal subunit protein bL21 (104 aa).

The protein belongs to the bacterial ribosomal protein bL21 family. As to quaternary structure, part of the 50S ribosomal subunit. Contacts protein L20.

In terms of biological role, this protein binds to 23S rRNA in the presence of protein L20. The sequence is that of Large ribosomal subunit protein bL21 from Tropheryma whipplei (strain Twist) (Whipple's bacillus).